Consider the following 236-residue polypeptide: N-alpha-acetyltransferase 40 (236 aa).

G2 is lipidated: N-myristoyl glycine. Residues 63-217 (SDLDQKTIDW…DCTYEILSKR (155 aa)) enclose the N-acetyltransferase domain. Substrate contacts are provided by residues Y85, 127–129 (DVE), and Y138. Residues 140–142 (VQL) and 148–153 (RKGVGK) contribute to the acetyl-CoA site. T174 serves as a coordination point for substrate. N179 contributes to the acetyl-CoA binding site. Y211 provides a ligand contact to substrate.

The protein belongs to the acetyltransferase family. NAA40 subfamily.

It is found in the cytoplasm. The protein resides in the nucleus. The enzyme catalyses N-terminal L-seryl-[histone H4] + acetyl-CoA = N-terminal N(alpha)-acetyl-L-seryl-[histone H4] + CoA + H(+). The catalysed reaction is N-terminal L-seryl-[histone H2A] + acetyl-CoA = N-terminal N(alpha)-acetyl-L-seryl-[histone H2A] + CoA + H(+). In terms of biological role, N-alpha-acetyltransferase that specifically mediates the acetylation of the N-terminal residues of histones H4 and H2A. In contrast to other N-alpha-acetyltransferase, has a very specific selectivity for histones H4 and H2A N-terminus and specifically recognizes the 'Ser-Gly-Arg-Gly sequence'. The polypeptide is N-alpha-acetyltransferase 40 (naa40) (Xenopus laevis (African clawed frog)).